The primary structure comprises 234 residues: N-acetyl-alpha-D-glucosaminyl L-malate deacetylase 1 (234 aa).

The Zn(2+) site is built by histidine 12, aspartate 15, and histidine 113.

Belongs to the PIGL family. Homohexamer. Trimer of dimers. Zn(2+) serves as cofactor.

The catalysed reaction is (S)-malyl N-acetyl-alpha-D-glucosaminide + H2O = (S)-malyl alpha-D-glucosaminide + acetate. Functionally, involved in bacillithiol (BSH) biosynthesis. Catalyzes the second step of the pathway, the deacetylation of N-acetylglucosaminylmalate (GlcNAc-Mal) to glucosamine malate (GlcN-Mal). This Bacillus cereus (strain ATCC 14579 / DSM 31 / CCUG 7414 / JCM 2152 / NBRC 15305 / NCIMB 9373 / NCTC 2599 / NRRL B-3711) protein is N-acetyl-alpha-D-glucosaminyl L-malate deacetylase 1.